A 235-amino-acid chain; its full sequence is Pyridoxine 5'-phosphate synthase (235 aa).

Asn-6 lines the 3-amino-2-oxopropyl phosphate pocket. A 1-deoxy-D-xylulose 5-phosphate-binding site is contributed by 8–9 (DH). Arg-17 provides a ligand contact to 3-amino-2-oxopropyl phosphate. His-42 serves as the catalytic Proton acceptor. 1-deoxy-D-xylulose 5-phosphate is bound by residues Arg-44 and His-49. Glu-69 serves as the catalytic Proton acceptor. Thr-99 is a 1-deoxy-D-xylulose 5-phosphate binding site. His-189 (proton donor) is an active-site residue. Residues Gly-190 and 211-212 (GH) contribute to the 3-amino-2-oxopropyl phosphate site.

This sequence belongs to the PNP synthase family. Homooctamer; tetramer of dimers.

It localises to the cytoplasm. The catalysed reaction is 3-amino-2-oxopropyl phosphate + 1-deoxy-D-xylulose 5-phosphate = pyridoxine 5'-phosphate + phosphate + 2 H2O + H(+). Its pathway is cofactor biosynthesis; pyridoxine 5'-phosphate biosynthesis; pyridoxine 5'-phosphate from D-erythrose 4-phosphate: step 5/5. Catalyzes the complicated ring closure reaction between the two acyclic compounds 1-deoxy-D-xylulose-5-phosphate (DXP) and 3-amino-2-oxopropyl phosphate (1-amino-acetone-3-phosphate or AAP) to form pyridoxine 5'-phosphate (PNP) and inorganic phosphate. The polypeptide is Pyridoxine 5'-phosphate synthase (Chlorobium luteolum (strain DSM 273 / BCRC 81028 / 2530) (Pelodictyon luteolum)).